A 159-amino-acid chain; its full sequence is Oleosin Cor a 12 (159 aa).

The segment covering 1–10 (MADRPQQLQV) has biased composition (polar residues). The tract at residues 1-24 (MADRPQQLQVHPQRGHGHYEGGIK) is disordered. A run of 3 helical transmembrane segments spans residues 45 to 65 (VGGTLLALAGLTLAGSVIGLL), 70 to 90 (LFIIFSPVLVPAAIVVGLAVA), and 92 to 112 (FLSSGALGLTGLSSLSWVLNY).

The protein belongs to the oleosin family. As to expression, expressed in seeds.

The protein resides in the lipid droplet. Its subcellular location is the membrane. In terms of biological role, may have a structural role to stabilize the lipid body during desiccation of the seed by preventing coalescence of the oil. Probably interacts with both lipid and phospholipid moieties of lipid bodies. May also provide recognition signals for specific lipase anchorage in lipolysis during seedling growth. This chain is Oleosin Cor a 12, found in Corylus avellana (European hazel).